A 290-amino-acid polypeptide reads, in one-letter code: uncharacterized protein (290 aa).

5 helical membrane-spanning segments follow: residues 14-34 (ALLNIFAYVILAVVKLVIGIL), 82-102 (ISSLVASFIMMAVGIEVLIGG), 115-135 (NLIAAWTALGSAVFMYGIYLY), 158-174 (DAFVSAGAFIGVFSSQL), and 176-196 (LPWVDPVTAFIIGIIICKTAW).

The protein belongs to the cation diffusion facilitator (CDF) transporter (TC 2.A.4) family.

The protein localises to the cell membrane. This is an uncharacterized protein from Bacillus subtilis (strain 168).